The following is a 399-amino-acid chain: Elongation factor Tu (399 aa).

The tr-type G domain occupies 10-204; that stretch reads KPHVNIGTIG…AVDASIPEPE (195 aa). Positions 19–26 are G1; sequence GHVDHGKT. Residue 19 to 26 coordinates GTP; sequence GHVDHGKT. Position 26 (T26) interacts with Mg(2+). The segment at 60–64 is G2; sequence GITIN. The segment at 81 to 84 is G3; it reads DCPG. GTP contacts are provided by residues 81-85 and 136-139; these read DCPGH and NKCD. The segment at 136–139 is G4; it reads NKCD. Positions 174–176 are G5; that stretch reads SGL.

Belongs to the TRAFAC class translation factor GTPase superfamily. Classic translation factor GTPase family. EF-Tu/EF-1A subfamily. Monomer.

It is found in the cytoplasm. It catalyses the reaction GTP + H2O = GDP + phosphate + H(+). Functionally, GTP hydrolase that promotes the GTP-dependent binding of aminoacyl-tRNA to the A-site of ribosomes during protein biosynthesis. The protein is Elongation factor Tu of Prochlorococcus marinus subsp. pastoris (strain CCMP1986 / NIES-2087 / MED4).